The sequence spans 378 residues: UPF0754 membrane protein BCAH820_0954 (378 aa).

The next 2 helical transmembrane spans lie at 1-21 (MNIW…GGFT) and 357-377 (YLGA…LLFL).

It belongs to the UPF0754 family.

It localises to the cell membrane. The polypeptide is UPF0754 membrane protein BCAH820_0954 (Bacillus cereus (strain AH820)).